The sequence spans 84 residues: Toxin Tst1 (84 aa).

The N-terminal stretch at 1 to 19 (MKGMILFISCLLLIDIVVG) is a signal peptide. In terms of domain architecture, LCN-type CS-alpha/beta spans 21-82 (KEGYLMDHEG…VWDRATNKCG (62 aa)). Cystine bridges form between Cys-31/Cys-81, Cys-35/Cys-57, Cys-43/Cys-62, and Cys-47/Cys-64. Residue Cys-81 is modified to Cysteine amide.

In terms of tissue distribution, expressed by the venom gland.

The protein localises to the secreted. Its function is as follows. Beta toxins bind voltage-independently at site-4 of sodium channels (Nav) and shift the voltage of activation toward more negative potentials thereby affecting sodium channel activation and promoting spontaneous and repetitive firing. This toxin is active only on mammals. Is toxic to mice. The sequence is that of Toxin Tst1 from Tityus stigmurus (Brazilian scorpion).